The following is a 390-amino-acid chain: 1-deoxy-D-xylulose 5-phosphate reductoisomerase (390 aa).

Residues Thr10, Gly11, Ser12, Val13, Gly38, Asn40, and Asn123 each coordinate NADPH. Position 124 (Lys124) interacts with 1-deoxy-D-xylulose 5-phosphate. Glu125 is a binding site for NADPH. Position 149 (Asp149) interacts with Mn(2+). Residues Ser150, Glu151, Ser175, and His198 each coordinate 1-deoxy-D-xylulose 5-phosphate. Residue Glu151 coordinates Mn(2+). Gly204 is a binding site for NADPH. 1-deoxy-D-xylulose 5-phosphate is bound by residues Ser211, Asn216, Lys217, and Glu220. Glu220 is a binding site for Mn(2+).

The protein belongs to the DXR family. The cofactor is Mg(2+). Mn(2+) is required as a cofactor.

The enzyme catalyses 2-C-methyl-D-erythritol 4-phosphate + NADP(+) = 1-deoxy-D-xylulose 5-phosphate + NADPH + H(+). It functions in the pathway isoprenoid biosynthesis; isopentenyl diphosphate biosynthesis via DXP pathway; isopentenyl diphosphate from 1-deoxy-D-xylulose 5-phosphate: step 1/6. In terms of biological role, catalyzes the NADPH-dependent rearrangement and reduction of 1-deoxy-D-xylulose-5-phosphate (DXP) to 2-C-methyl-D-erythritol 4-phosphate (MEP). The sequence is that of 1-deoxy-D-xylulose 5-phosphate reductoisomerase from Paracoccus denitrificans (strain Pd 1222).